A 2391-amino-acid chain; its full sequence is Filaggrin-2 (2391 aa).

The S-100-like stretch occupies residues 1 to 81 (MTDLLRSVVT…TEFLLMIFKL (81 aa)). EF-hand domains follow at residues 8 to 43 (VVTVIDVFYKYTKQDGECGTLSKGELKELLEKELHP) and 49 to 84 (DDPDTVDVIMHMLDRDHDRRLDFTEFLLMIFKLTMA). Ca(2+)-binding residues include Asp62, Asp64, Asp66, Arg68, and Glu73. Disordered stretches follow at residues 96–275 (ASGS…DSGR), 349–369 (SYSQRGYGARENGQPQNCGGQ), and 406–2391 (NSSS…LSRH). Over residues 98-107 (GSKKHRRGHR) the composition is skewed to basic residues. Residues 111-121 (EESETEEDEED) are compositionally biased toward acidic residues. A compositionally biased stretch (basic residues) spans 149–163 (GTVKCRHGSNSRRLG). Residues 166–176 (GNLSSSGNQEG) show a composition bias toward polar residues. Residues 193–209 (GKDRHGSSSVELRERIN) are compositionally biased toward basic and acidic residues. A Filaggrin 1 repeat occupies 245 to 289 (ETSGHESNSTQSRIREQKLGSSCSGSGDSGRRSHACGYSNSSGCG). 2 stretches are compositionally biased toward polar residues: residues 420–442 (GSGSSQSTSFEQHGTGLSQSSGF) and 449–476 (SGQTCGQHESTSSQSLGYDQHGSSSGKT). The Filaggrin 2 repeat unit spans residues 421–466 (SGSSQSTSFEQHGTGLSQSSGFEQHVCGSGQTCGQHESTSSQSLGY). Residues 480 to 507 (GQHGSGSGQSSGFGQCGSGSGQSSGFGQ) are compositionally biased toward gly residues. Residues 508–562 (HGSVSGQSSGFGQHGSVSGQSSGFGQHESRSRQSSYGQHGSGSSQSSGYGQYGSR) are compositionally biased toward low complexity. A compositionally biased stretch (gly residues) spans 568–604 (GQHGLGSGQSTGFGQYGSGSGQSSGFGQHGSGSGQSS). Low complexity predominate over residues 605–655 (GFGQHESRSGQSSYGQHSSGSSQSSGYGQHGSRQTSGFGQHGSGSSQSTGF). Over residues 656 to 666 (GQYGSGSGQSS) the composition is skewed to gly residues. Residues 667-734 (GFGQHVSGSG…SSGQSSSFGQ (68 aa)) show a composition bias toward low complexity. A compositionally biased stretch (gly residues) spans 735-756 (HGSGSGQSSGFGQHGSGSGQSS). Positions 757 to 807 (GFGQHESRSGQSSYGQHSSGSSQSSGYGQHGSRQTSGFGQHGSGSSQSTGF) are enriched in low complexity. A compositionally biased stretch (gly residues) spans 808–831 (GQYGSGSGQSAGFGQHGSGSGQSS). Over residues 832-884 (GFGQHESRSHQSSYGQHGSGSSQSSGYGQHGSSSGQTSGFGQHRSSSGQYSGF) the composition is skewed to low complexity. The span at 885–908 (GQHGSGSGQSSGFGQHGTGSGQYS) shows a compositional bias: gly residues. The span at 918-956 (HQSSYGQHGSGSSQSSGYGQHGSSSGQTFGFGQHRSGSG) shows a compositional bias: low complexity. The segment covering 957–972 (QSSGFGQHGSGSGQSS) has biased composition (gly residues). Low complexity-rich tracts occupy residues 973-982 (GFGQHESGSG) and 994-1027 (SSQSNYGQHGSGSSQSSGYGQHGSSSGQTTGFGQ). One copy of the Filaggrin 3 repeat lies at 1019-1051 (SGQTTGFGQHRSSSGQYSGFGQHGSGSDQSSGF). Positions 1052–1062 (GQHGTGSGQSS) are enriched in gly residues. A compositionally biased stretch (low complexity) spans 1063–1098 (GFGQYESRSRQSSYGQHGSGSSQSSGYGQHGSNSGQ). A Filaggrin 4 repeat occupies 1097-1141 (GQTSGFGQHRPGSGQSSGFGQYGSGSGQSSGFGQHGSGTGKSSGF). Over residues 1111–1137 (QSSGFGQYGSGSGQSSGFGQHGSGTGK) the composition is skewed to gly residues. Over residues 1148–1174 (SGQSSYGQHGTGSSQSSGCGQHESGSG) the composition is skewed to low complexity. Polar residues predominate over residues 1175-1198 (PTTSFGQHVSGSDNFSSSGQHISD). Residues 1206–1220 (GQYGSGSGQSTGLGQ) are compositionally biased toward gly residues. Positions 1226–1249 (VESGSTVHGRQETTHGQTINTTRH) are enriched in polar residues. Positions 1250 to 1263 (SQSGQGQSTQTGSR) are enriched in low complexity. Phosphoserine is present on Ser1276. Residues 1329 to 1343 (HGQSTQTGSRTSGRQ) show a composition bias toward polar residues. Residues 1346 to 1355 (SHSDATDSEV) show a composition bias toward basic and acidic residues. A compositionally biased stretch (polar residues) spans 1366-1377 (QEQTHSQAGSQH). The span at 1378-1390 (GESESTVHERHET) shows a compositional bias: basic and acidic residues. The span at 1406 to 1416 (HGQSTQRGSRT) shows a compositional bias: low complexity. 2 positions are modified to phosphoserine: Ser1427 and Ser1428. Residues 1439–1459 (RPQSQEQTHGQAGSQHGESGS) are compositionally biased toward polar residues. Residues 1455–1510 (GESGSTVHGRHGTTHGQTGDTTRHAHYHHGKSTQRGSSTTGRRGSGHSESSDSEVH) form a Filaggrin 5 repeat. Residues 1487–1496 (TQRGSSTTGR) are compositionally biased toward low complexity. Phosphoserine occurs at positions 1504 and 1505. The span at 1510–1529 (HSGGSHTHSGHTHGQSGSQH) shows a compositional bias: low complexity. Residues 1544–1559 (HGQTGDTTRHSYSGHE) are compositionally biased toward polar residues. The segment covering 1560–1572 (QTTQTGSRTTGRQ) has biased composition (low complexity). Composition is skewed to basic and acidic residues over residues 1575-1584 (SHSESTDSEV) and 1605-1618 (QHEEPEFTVHERHG). Ser1579 carries the phosphoserine modification. Residues 1607–1662 (EEPEFTVHERHGTTHGQIGDTTGHSHSGHGQSTQRGSRTTGRQRSSHSESSDSEVH) form a Filaggrin 6 repeat. The segment covering 1627-1649 (TTGHSHSGHGQSTQRGSRTTGRQ) has biased composition (low complexity). The span at 1652-1661 (SHSESSDSEV) shows a compositional bias: basic and acidic residues. A phosphoserine mark is found at Ser1656 and Ser1657. 2 stretches are compositionally biased toward low complexity: residues 1662 to 1686 (HSGVSHTHTGHTHGQAGSQHGQSES) and 1711 to 1720 (GLTTQTGSRT). Positions 1755–1768 (QHGESESIVHERHG) are enriched in basic and acidic residues. A Filaggrin 7 repeat occupies 1757 to 1812 (GESESIVHERHGTIHGQTGDTTRHAHSGHGQSTQTGSRTTGRRSSGHSEYSDSEGH). The span at 1784–1795 (GHGQSTQTGSRT) shows a compositional bias: low complexity. Phosphoserine occurs at positions 1800 and 1807. Positions 1834-1845 (GESESIVDERHG) are enriched in basic and acidic residues. Over residues 1849–1873 (GQTGDTSGHSQSGHGQSTQSGSSTT) the composition is skewed to low complexity. Residues 1879-1888 (GHSESSDSEV) are compositionally biased toward basic and acidic residues. A phosphoserine mark is found at Ser1883, Ser1884, and Ser1959. Filaggrin repeat units follow at residues 1928-1964 (DTTEHGHPSHGQTIQTGSRTTGRRGSGHSEYSDSEGP) and 1984-2039 (PESG…SEGH). Low complexity-rich tracts occupy residues 1963–1982 (GPSGVSHTHSGHTHGQAGSH) and 2013–2022 (GQSTQRGSRT). Ser2034 carries the phosphoserine modification. Low complexity-rich tracts occupy residues 2039-2059 (HSGVSHTHSGHAHGQAGSQHG), 2114-2125 (HSGVSHTHSGHT), and 2162-2176 (HGQSTQTGSRTTGRQ). A Filaggrin 10 repeat occupies 2134 to 2189 (GESGSAIHGRQGTIHGQTGDTTRHGQSGHGQSTQTGSRTTGRQRSSHSESSDSEVH). A compositionally biased stretch (basic and acidic residues) spans 2179–2190 (SHSESSDSEVHS). 3 stretches are compositionally biased toward low complexity: residues 2201–2211 (HSQAGSRHGQS), 2219–2228 (QGTTHGQTGD), and 2238–2247 (GQSTQRGSRT). Over residues 2273-2288 (GHIQGQAGSQQRQPGS) the composition is skewed to polar residues. Positions 2320 to 2331 (SRSSRASHFQSH) are enriched in low complexity. The span at 2367 to 2391 (SRKSISNSHLSWSTDSTANKQLSRH) shows a compositional bias: polar residues.

This sequence belongs to the S100-fused protein family. The protein in the N-terminal section; belongs to the S-100 family. Post-translationally, deiminated by PADI1, PADI2 or PADI3 in vitro. The deiminated form is degraded by calpain-1/CAPN1 more quickly and into shorter peptides than the intact protein. In terms of processing, may be processed by calpain-1/CAPN1 in the uppermost epidermal layers. Expressed in skin, thymus, stomach and placenta, but not detected in heart, brain, liver, lung, bone marrow, small intestine, spleen, prostate, colon, adrenal gland, kidney, pancreas, mammary gland, bladder, thyroid, salivary gland and trachea. Weakly expressed in esophagus, tonsils and testis (at protein level). In the skin, strongly expressed in the upper stratum granulosum and lower stratum corneum, but not detected in the upper stratum corneum (at protein level). In scalp hair follicles, mainly restricted within the granular and cornified cells surrounding the infundibular outer root sheath, with weak expression in central and proximal outer root sheath (at protein level). Tends to be down-regulated in sporiatic lesions compared to non-lesional skin inthe same patients.

Its subcellular location is the cytoplasm. It is found in the cytoplasmic granule. Essential for normal cell-cell adhesion in the cornified cell layers. Important for proper integrity and mechanical strength of the stratum corneum of the epidermis. In Homo sapiens (Human), this protein is Filaggrin-2 (FLG2).